The following is a 455-amino-acid chain: Beta-1,4-mannosyltransferase bre-3 (455 aa).

Belongs to the glycosyltransferase 2 family. In terms of tissue distribution, endothelial cells.

It localises to the cytoplasm. It participates in protein modification; protein glycosylation. Its function is as follows. Glycosyltransferase with a proposed role in glycosphingolipid biosynthesis. Involved in susceptibility to pore-forming crystal toxins in conjunction with bre-1, bre-2, bre-4 and bre-5. Involved in resistance to the nematotoxic C.cinerea galectin Cgl2. Has a role in determining brood size. In Caenorhabditis elegans, this protein is Beta-1,4-mannosyltransferase bre-3 (bre-3).